Consider the following 397-residue polypeptide: 1-carboxy-3-chloro-3,4-dihydroxycyclo hexa-1,5-diene dehydrogenase (397 aa).

It to P.putida PHT4.

This is 1-carboxy-3-chloro-3,4-dihydroxycyclo hexa-1,5-diene dehydrogenase (cbaC) from Comamonas testosteroni (Pseudomonas testosteroni).